The primary structure comprises 84 residues: Putative regulatory protein Hore_09800 (84 aa).

It belongs to the RemA family.

The polypeptide is Putative regulatory protein Hore_09800 (Halothermothrix orenii (strain H 168 / OCM 544 / DSM 9562)).